Consider the following 311-residue polypeptide: Pantothenate synthetase (311 aa).

43–50 (MGALHEGH) contacts ATP. His-50 serves as the catalytic Proton donor. Gln-75 provides a ligand contact to (R)-pantoate. Gln-75 is a beta-alanine binding site. 161–164 (GEKD) lines the ATP pocket. Gln-167 contacts (R)-pantoate. Residues Val-190 and 198–201 (MSSR) each bind ATP.

This sequence belongs to the pantothenate synthetase family. Homodimer.

Its subcellular location is the cytoplasm. It carries out the reaction (R)-pantoate + beta-alanine + ATP = (R)-pantothenate + AMP + diphosphate + H(+). It participates in cofactor biosynthesis; (R)-pantothenate biosynthesis; (R)-pantothenate from (R)-pantoate and beta-alanine: step 1/1. In terms of biological role, catalyzes the condensation of pantoate with beta-alanine in an ATP-dependent reaction via a pantoyl-adenylate intermediate. This chain is Pantothenate synthetase, found in Mycolicibacterium vanbaalenii (strain DSM 7251 / JCM 13017 / BCRC 16820 / KCTC 9966 / NRRL B-24157 / PYR-1) (Mycobacterium vanbaalenii).